A 210-amino-acid chain; its full sequence is Probable nicotinate-nucleotide adenylyltransferase (210 aa).

It belongs to the NadD family.

The catalysed reaction is nicotinate beta-D-ribonucleotide + ATP + H(+) = deamido-NAD(+) + diphosphate. It functions in the pathway cofactor biosynthesis; NAD(+) biosynthesis; deamido-NAD(+) from nicotinate D-ribonucleotide: step 1/1. Catalyzes the reversible adenylation of nicotinate mononucleotide (NaMN) to nicotinic acid adenine dinucleotide (NaAD). The sequence is that of Probable nicotinate-nucleotide adenylyltransferase from Vesicomyosocius okutanii subsp. Calyptogena okutanii (strain HA).